The following is a 35-amino-acid chain: Cupiennin-2d (35 aa).

Gln-35 carries the glutamine amide modification.

In terms of tissue distribution, expressed by the venom gland.

Its subcellular location is the secreted. The sequence is that of Cupiennin-2d from Cupiennius salei (American wandering spider).